The primary structure comprises 302 residues: Glycine--tRNA ligase alpha subunit (302 aa).

Belongs to the class-II aminoacyl-tRNA synthetase family. Tetramer of two alpha and two beta subunits.

The protein resides in the cytoplasm. It carries out the reaction tRNA(Gly) + glycine + ATP = glycyl-tRNA(Gly) + AMP + diphosphate. The protein is Glycine--tRNA ligase alpha subunit of Xanthomonas oryzae pv. oryzae (strain PXO99A).